We begin with the raw amino-acid sequence, 232 residues long: Large ribosomal subunit protein uL1 (232 aa).

The protein belongs to the universal ribosomal protein uL1 family. As to quaternary structure, part of the 50S ribosomal subunit.

Binds directly to 23S rRNA. The L1 stalk is quite mobile in the ribosome, and is involved in E site tRNA release. Functionally, protein L1 is also a translational repressor protein, it controls the translation of the L11 operon by binding to its mRNA. The chain is Large ribosomal subunit protein uL1 from Alkaliphilus oremlandii (strain OhILAs) (Clostridium oremlandii (strain OhILAs)).